The following is a 95-amino-acid chain: Probable FAD-linked sulfhydryl oxidase OPG072 (95 aa).

Over Met-1–Arg-8 the chain is Intravirion. Residues Met-1–Leu-95 enclose the ERV/ALR sulfhydryl oxidase domain. The helical transmembrane segment at Ala-9–Gly-25 threads the bilayer. Topologically, residues Asn-26–Leu-95 are virion surface. The cysteines at positions 43 and 46 are disulfide-linked.

It belongs to the orthopoxvirus OPG072 family. In terms of assembly, interacts with OPG128; this interaction involves formation of a transient disulfide-bonded intermediate, allowing disulfide bond transfer. The cofactor is FAD.

It is found in the virion membrane. The protein localises to the host cytoplasm. It catalyses the reaction 2 R'C(R)SH + O2 = R'C(R)S-S(R)CR' + H2O2. FAD-dependent sulfhydryl oxidase that catalyzes disulfide bond formation. The complete pathway for formation of disulfide bonds in intracellular virion membrane proteins sequentially involves thiol-disulfide transfer between OPG072, OPG128 and OPG088. The sequence is that of Probable FAD-linked sulfhydryl oxidase OPG072 (OPG072) from Vaccinia virus (strain Copenhagen) (VACV).